A 526-amino-acid polypeptide reads, in one-letter code: Acid-sensing ion channel 1 (526 aa).

Residues 1–49 are Cytoplasmic-facing; sequence MELKTEEEEVGGVQPVSIQAFASSSTLHGLAHIFSYERLSLKRALWALC. Residues 50–66 traverse the membrane as a helical segment; that stretch reads FLGSLAVLLCVCTERVQ. Residues 67–425 are Extracellular-facing; sequence YYFCYHHVTK…ETIEQKKAYE (359 aa). 7 disulfide bridges follow: Cys93–Cys194, Cys172–Cys179, Cys290–Cys365, Cys308–Cys361, Cys312–Cys359, Cys321–Cys343, and Cys323–Cys335. 2 N-linked (GlcNAc...) asparagine glycosylation sites follow: Asn366 and Asn393. Residues 426–456 traverse the membrane as a discontinuously helical segment; it reads IAGLLGDIGGQMGLFIGASILTVLELFDYAY. The GAS motif; ion selectivity filter motif lies at 442 to 444; the sequence is GAS. The Cytoplasmic segment spans residues 457-526; the sequence is EVIKHRLCRR…ARGTFEDFTC (70 aa). Phosphoserine occurs at positions 477 and 497.

It belongs to the amiloride-sensitive sodium channel (TC 1.A.6) family. ASIC1 subfamily. Homotrimer. Heterotrimer; with other ASIC proteins producing channel with different properties. Interacts with PICK1; regulates ASIC1 clustering in membranes. Interacts with STOM; alters heterotrimeric ASIC channels activity. Post-translationally, pH-gating could be regulated by serine proteases. In terms of processing, phosphorylation by PKA regulates interaction with PICK1 and subcellular localization. Phosphorylation by PKC may regulate the channel. In terms of tissue distribution, expressed in dorsal root ganglia and sciatic nerve (at protein level). Widely distributed throughout the brain. Expressed in olfactory bulb, neo and allocortical regions, dentate granule cells, pyramidal cells of CA1-CA3 subfields of the hippocampal formation, habenula, basolateral amygdaloid nuclei, and in the Purkinje and granule cells of the cerebellum. Diffusely detected over most other regions of the basal ganglia, including thalamic nuclei, substantia nigra, striatum and globus pallidus, hypothalamus, midbrain, pons, medulla and choroid plexus. Expressed only in dorsal root ganglion (DRG). As to expression, expressed exclusively in trigeminal ganglion and dorsal root ganglion.

Its subcellular location is the cell membrane. The protein resides in the postsynaptic cell membrane. The protein localises to the cell projection. It localises to the dendrite. It catalyses the reaction Na(+)(in) = Na(+)(out). It carries out the reaction Li(+)(in) = Li(+)(out). The catalysed reaction is K(+)(in) = K(+)(out). The enzyme catalyses Ca(2+)(in) = Ca(2+)(out). It catalyses the reaction H(+)(in) = H(+)(out). Its activity is regulated as follows. Inhibited by the diuretic drug amiloride. External calcium is required to potentiate proton activation of ASIC1 at physiological concentrations, but at higher, non-physiological concentrations, it inhibits activation. Also potentiated by other multivalent cations like Mg(2+), Ba(2+). Activated by FMRFamide-related neuropeptides. Inhibited by anti-inflammatory drugs like salicylic acid. The spider venom psalmotoxin-1 specifically inhibits the ASIC1 homotrimer. The snake venom mambalgin-1, mambalgin-2 and mambalgin-3 inhibit the homotrimer of Asic1a (ASIC1 isoform 1). The snake venom mambalgin-1 and mambalgin-2 inhibit heterotrimers of Asic1a-Asic1b (ASIC1 isoform 1-ASIC1 isoform 3). Heterotrimer of Asic1a-Asic2a is inhibited by the snake venom mambalgin-1, mambalgin-2 and mambalgin-3. Heterotrimer of Asic1a-Asic2b is inhibited by the snake venom mambalgin-1 and mambalgin-2. The spider venom Pi-theraphotoxin-Hm3a inhibits the homotrimer of Asic1a (ASIC1 isoform 1). The spider venom Pi-theraphotoxin-Hm3a inhibits heterotrimers of Asic1a-Asic1b (ASIC1 isoform 1-ASIC1 isoform 3). The spider venom Pi-hexatoxin-Hi1a inhibits the ASIC1 homotrimer. Not inhibited by extracellular calcium. Its function is as follows. Forms voltage-independent, pH-gated trimeric sodium channels that act as postsynaptic excitatory receptors in the nervous system, playing a crucial role in regulating synaptic plasticity, learning, and memory. Upon extracellular pH drop this channel elicits transient, fast activating, and completely desensitizing inward currents. Displays high selectivity for sodium ions but can also permit the permeation of other cations. Regulates more or less directly intracellular calcium concentration and CaMKII phosphorylation, and thereby the density of dendritic spines. Modulates neuronal activity in the circuits underlying innate fear. In terms of biological role, permeable to other cations including calcium, lithium and potassium. PH activation and steady-state inactivation are shifted to more acidic values. Forms channels that are not permeable to calcium as it discrimates stronger between monovalent cations. Functionally, has no pH-gated sodium channel activity per se but can associate with other ASICs and regulate their pH-sensitivity. This Rattus norvegicus (Rat) protein is Acid-sensing ion channel 1.